We begin with the raw amino-acid sequence, 448 residues long: MSPAFRTMDVEPRTKGILLEPFVHQVGGHSCVLRFNETTLCKPLVPREHQFYETLPAEMRRFTPQYKAVLIFVRCADEFGASGNIETKEQGVVSVRFEEDEDRNLCLIAYPLKGDHGTVDIVDNSDCEPKSKLLRWTNKKHHALETEKNPKDWVRQHRKEEKMKSHKLEEEFEWLKKSEVLYYSVEKKGNVSSQLKHYNPWSMKCHQQQLQRMKENAKHRNQYKFILLENLTSRYEVPCVLDLKMGTRQHGDDASEEKAANQIRKCQQSTSAVIGVRVCGMQVYQAGTGQLMFMNKYHGRKLSVQGFKEALFQFFHNGRYLRRELLGPVLKKLTELKAVLERQESYRFYSSSLLVIYDGKEWPEVTLDSDAEDLEDLSEESADESAGAYAYKPIGASSVDVRMIDFAHTTCRLYGEDSVVHEGQDAGYIFGLQSLIDIVTEISEESGE.

Residues 229–231 (ENL) and aspartate 242 contribute to the ATP site. Substrate contacts are provided by residues 238-246 (PCVLDLKMG), lysine 244, and 258-265 (KAANQIRK). Aspartate 405 provides a ligand contact to ATP. Residue histidine 408 coordinates substrate.

It belongs to the inositol phosphokinase (IPK) family. As to expression, highly expressed in brain and lung, and at slightly lower levels in liver, kidney and testis.

The protein localises to the nucleus. It carries out the reaction 1D-myo-inositol hexakisphosphate + ATP = 5-diphospho-1D-myo-inositol 1,2,3,4,6-pentakisphosphate + ADP. It participates in phospholipid metabolism; phosphatidylinositol metabolism. Its function is as follows. Converts inositol hexakisphosphate (InsP6) to diphosphoinositol pentakisphosphate (InsP7/PP-InsP5). May play a role in the regulation of Na(+)-dependent phosphate cotransport, possibly via its role in diphosphoinositol pentakisphosphate (InsP7/PP-InsP5) biosynthesis. In Mus musculus (Mouse), this protein is Inositol hexakisphosphate kinase 2 (Ip6k2).